Consider the following 355-residue polypeptide: Alanine racemase (355 aa).

Residue Lys-34 is the Proton acceptor; specific for D-alanine of the active site. At Lys-34 the chain carries N6-(pyridoxal phosphate)lysine. Arg-133 contributes to the substrate binding site. Catalysis depends on Tyr-249, which acts as the Proton acceptor; specific for L-alanine. Met-297 contacts substrate.

The protein belongs to the alanine racemase family. Pyridoxal 5'-phosphate serves as cofactor.

The catalysed reaction is L-alanine = D-alanine. It participates in amino-acid biosynthesis; D-alanine biosynthesis; D-alanine from L-alanine: step 1/1. Its function is as follows. Catalyzes the interconversion of L-alanine and D-alanine. May also act on other amino acids. This chain is Alanine racemase (alr), found in Rickettsia conorii (strain ATCC VR-613 / Malish 7).